The primary structure comprises 348 residues: Selenide, water dikinase (348 aa).

Residue cysteine 17 is part of the active site. ATP contacts are provided by residues lysine 20 and threonine 47–aspartate 49. Mg(2+) is bound at residue aspartate 50. Residues aspartate 67, aspartate 90, and glycine 138 to threonine 140 contribute to the ATP site. Aspartate 90 serves as a coordination point for Mg(2+). Position 226 (aspartate 226) interacts with Mg(2+).

Belongs to the selenophosphate synthase 1 family. Class I subfamily. Homodimer. Requires Mg(2+) as cofactor.

The enzyme catalyses hydrogenselenide + ATP + H2O = selenophosphate + AMP + phosphate + 2 H(+). Functionally, synthesizes selenophosphate from selenide and ATP. The sequence is that of Selenide, water dikinase from Porphyromonas gingivalis (strain ATCC BAA-308 / W83).